The following is a 79-amino-acid chain: MKTLLLTLVVMTIVCLDLGYTLTCYMNPSGTMVCKEHETMCYRLIVWTFQYHVLYLKGCSSSCPGGNNCACCSTDLCNN.

A signal peptide spans 1-23 (MKTLLLTLVVMTIVCLDLGYTLT). Cystine bridges form between Cys-24–Cys-41, Cys-34–Cys-59, Cys-63–Cys-71, and Cys-72–Cys-77.

This sequence belongs to the three-finger toxin family. Short-chain subfamily. In terms of tissue distribution, expressed by the venom gland.

It is found in the secreted. The protein is Toxin 3FTx-Oxy5 of Oxyuranus microlepidotus (Inland taipan).